The sequence spans 284 residues: ATP synthase gamma chain (284 aa).

This sequence belongs to the ATPase gamma chain family. In terms of assembly, F-type ATPases have 2 components, CF(1) - the catalytic core - and CF(0) - the membrane proton channel. CF(1) has five subunits: alpha(3), beta(3), gamma(1), delta(1), epsilon(1). CF(0) has three main subunits: a, b and c.

It is found in the cell membrane. Functionally, produces ATP from ADP in the presence of a proton gradient across the membrane. The gamma chain is believed to be important in regulating ATPase activity and the flow of protons through the CF(0) complex. The chain is ATP synthase gamma chain from Bacillus licheniformis (strain ATCC 14580 / DSM 13 / JCM 2505 / CCUG 7422 / NBRC 12200 / NCIMB 9375 / NCTC 10341 / NRRL NRS-1264 / Gibson 46).